Consider the following 913-residue polypeptide: Protein translocase subunit SecA (913 aa).

ATP-binding positions include Gln87, 105 to 109 (GEGKT), and Asp512. Residues Cys897, Cys899, Cys908, and His909 each coordinate Zn(2+).

This sequence belongs to the SecA family. As to quaternary structure, monomer and homodimer. Part of the essential Sec protein translocation apparatus which comprises SecA, SecYEG and auxiliary proteins SecDF-YajC and YidC. Zn(2+) serves as cofactor.

It is found in the cell inner membrane. The protein localises to the cytoplasm. The catalysed reaction is ATP + H2O + cellular proteinSide 1 = ADP + phosphate + cellular proteinSide 2.. Functionally, part of the Sec protein translocase complex. Interacts with the SecYEG preprotein conducting channel. Has a central role in coupling the hydrolysis of ATP to the transfer of proteins into and across the cell membrane, serving both as a receptor for the preprotein-SecB complex and as an ATP-driven molecular motor driving the stepwise translocation of polypeptide chains across the membrane. This chain is Protein translocase subunit SecA, found in Pseudomonas syringae pv. syringae (strain B728a).